The following is a 445-amino-acid chain: Guanosine nucleotide diphosphate dissociation inhibitor At5g09550 (445 aa).

This sequence belongs to the Rab GDI family.

Its function is as follows. Regulates the GDP/GTP exchange reaction of most RAB proteins by inhibiting the dissociation of GDP from them, and the subsequent binding of GTP. This chain is Guanosine nucleotide diphosphate dissociation inhibitor At5g09550, found in Arabidopsis thaliana (Mouse-ear cress).